The sequence spans 201 residues: Recombination protein RecR (201 aa).

The C4-type zinc-finger motif lies at 57–72 (CADCRTFTEQPVCTIC). In terms of domain architecture, Toprim spans 81–176 (GQICVVESPA…MASRIAHGVP (96 aa)).

Belongs to the RecR family.

Its function is as follows. May play a role in DNA repair. It seems to be involved in an RecBC-independent recombinational process of DNA repair. It may act with RecF and RecO. The protein is Recombination protein RecR of Sodalis glossinidius (strain morsitans).